Reading from the N-terminus, the 309-residue chain is MPIRVQDELPAVNFLREENVFVMKASRATGQEIRPLKVLILNLMPKKIETENQFLRLLSNSPLQVDVQLLRIDARESRNTPSEHLNNFYCDFEDIRNDNFDGLIVTGAPLGLVEFNDVAYWPQIKQVLEWAKDHVTSTLFVCWAVQAALNILYGIPKQTRSDKLSGVYEHHILHPHALLTRGFDDFFLAPHSRYADFPAALIRDYTDLEILAETEDGDAYLFASKDKRIAFVTGHPEYDAHTLASEFFRDVEAGLSPEVPYNYFPKNDPQIPPRASWRSHGNLLFINWLNYYVYQITPYDLRHMNPTLE.

Cysteine 142 acts as the Acyl-thioester intermediate in catalysis. Substrate contacts are provided by lysine 163 and serine 192. Residue histidine 235 is the Proton acceptor of the active site. The active site involves glutamate 237. Substrate is bound at residue arginine 249.

This sequence belongs to the MetA family.

Its subcellular location is the cytoplasm. It catalyses the reaction L-homoserine + succinyl-CoA = O-succinyl-L-homoserine + CoA. It participates in amino-acid biosynthesis; L-methionine biosynthesis via de novo pathway; O-succinyl-L-homoserine from L-homoserine: step 1/1. Its function is as follows. Transfers a succinyl group from succinyl-CoA to L-homoserine, forming succinyl-L-homoserine. This chain is Homoserine O-succinyltransferase, found in Enterobacter sp. (strain 638).